Reading from the N-terminus, the 331-residue chain is Calcium-binding and coiled-coil domain-containing protein 2 (331 aa).

Positions 128–131 (IMVV) match the CLIR motif. The stretch at 132–309 (INKEKVEEME…EKASWEKEKA (178 aa)) forms a coiled coil. The segment at 189–310 (KASWEKEKAS…KASWEKEKAP (122 aa)) is disordered. Positions 190–193 (ASWE) match the LIR-like motif. The tract at residues 292 to 302 (KEKASWEEEKA) is interaction with LGALS8.

The protein belongs to the CALCOCO family. As to quaternary structure, dimer. Part of a complex consisting of CALCOCO2, TAX1BP1 and MYO6. Interacts with MYO6. Interacts with GEMIN4. Interacts with ATG8 family members MAP1LC3A, MAP1LC3B, GABARAP, GABARAPL1 and GABARAPL2. Interacts with ATG8 family member MAP1LC3C. Interacts with LGALS8. Interacts with TOM1; the interaction is indirect and is mediated by MYO6, which acts as a bridge between TOM1 and CALCOCO2. Interacts with AZI2.

It localises to the cytoplasm. The protein resides in the perinuclear region. It is found in the cytoskeleton. Its subcellular location is the cytoplasmic vesicle. The protein localises to the autophagosome membrane. Xenophagy-specific receptor required for autophagy-mediated intracellular bacteria degradation. Acts as an effector protein of galectin-sensed membrane damage that restricts the proliferation of infecting pathogens upon entry into the cytosol by targeting LGALS8-associated bacteria for autophagy. Initially orchestrates bacteria targeting to autophagosomes and subsequently ensures pathogen degradation by regulating pathogen-containing autophagosome maturation. Bacteria targeting to autophagosomes relies on its interaction with MAP1LC3A, MAP1LC3B and/or GABARAPL2, whereas regulation of pathogen-containing autophagosome maturation requires the interaction with MAP3LC3C. May play a role in ruffle formation and actin cytoskeleton organization and seems to negatively regulate constitutive secretion. The sequence is that of Calcium-binding and coiled-coil domain-containing protein 2 from Mus musculus (Mouse).